The chain runs to 232 residues: Ubiquinone biosynthesis O-methyltransferase (232 aa).

The S-adenosyl-L-methionine site is built by arginine 36, glycine 55, aspartate 76, and leucine 120.

It belongs to the methyltransferase superfamily. UbiG/COQ3 family.

The catalysed reaction is a 3-demethylubiquinol + S-adenosyl-L-methionine = a ubiquinol + S-adenosyl-L-homocysteine + H(+). It carries out the reaction a 3-(all-trans-polyprenyl)benzene-1,2-diol + S-adenosyl-L-methionine = a 2-methoxy-6-(all-trans-polyprenyl)phenol + S-adenosyl-L-homocysteine + H(+). Its pathway is cofactor biosynthesis; ubiquinone biosynthesis. O-methyltransferase that catalyzes the 2 O-methylation steps in the ubiquinone biosynthetic pathway. The protein is Ubiquinone biosynthesis O-methyltransferase of Pseudomonas putida (strain W619).